Consider the following 724-residue polypeptide: 4-alpha-glucanotransferase (724 aa).

This sequence belongs to the disproportionating enzyme family.

Its subcellular location is the cytoplasm. The enzyme catalyses Transfers a segment of a (1-&gt;4)-alpha-D-glucan to a new position in an acceptor, which may be glucose or a (1-&gt;4)-alpha-D-glucan.. In Mycobacterium bovis (strain ATCC BAA-935 / AF2122/97), this protein is 4-alpha-glucanotransferase (malQ).